Reading from the N-terminus, the 955-residue chain is MPRHLSRWGLAIAAIALGLSLLTRIHIETLWFTALGIPTVFLRRLAVQALLFSVVGIAITGLIGGNLRWAARHQTDQPDRPAPRLQLGGLLTVLTLLWIALLALTTQAILAAWNCQTGRALPFLPQILTLDWLQSSLITAGSWPLGMGLLLGVGSLVLFLWRPWPLLIGLSSLTSLAIALLTSREWLRIWPAFAAESVSDRDPIFQQDLAFYLFRLPALEVLQFDLWIGLAFSFCAVLAVYYLAKQSVSNAEFRGFAPSQQRHLVRLAIAIALFLAGHCWLAQRQLLFSELGAVYGIGFTDRWVKLPLLQVWMILFGIAAIALFWQSRRGLLPQRWIRNFQLAAIASVLIWVTLPAIVQQLVVQPNEIARELPYLKQAILFTRRAFGLDQIETRTFDPQPSLNRAVLAANRETVQNIRLWDTRPLLQSNRQLQQIRLYYSFPSAQIDRYRLQTSFGDALQQVIIAARELDYTAIPAAAKTWVNEHLVYTHGYGFTLSPVNSSAPDGLPRYFVKDIGANTRIIGDASLGISTEAVKAAISTENPRIYYGQLTRNYVFTPSRTQELDYPSGNDNVYNIYDGKGGVTLGNYAQRLLFSLYLRDWRLPFSGDLTAQTRVLFRRQIEDRVRAIAPFLRYDAEPYLVSVNADTAEASGLGRSSLFWILDAYTVSDRYPYADPGEQPFNYIRNSVKVIIDAYNGSVQFYIVDPKDPLIQTWSRLFPSLFQPIDAMAPVLRSHLRYPTDLFKAQSSQLLTYHVLDPQVFYNRDDQWAYPREIYAGETATVQPYYLITRLPTAASEEFLILTPFTPLGRNNMIAWLAGRSDGEEYGRLLLYEFPRQRLIFGPEQITARINQDPQISEQITLWNREGSRAAEGNLLVIPIDQALLYVEPLYLEASRNSLPALTRVITAYQDRIVMTPSLLESLQKLFPDSTPALTPLEQPVLTTEQSAVLNPDQP.

The next 9 membrane-spanning stretches (helical) occupy residues 12 to 32 (IAAI…TLWF), 45 to 65 (LAVQ…LIGG), 85 to 105 (LQLG…LALT), 141 to 161 (GSWP…LFLW), 163 to 183 (PWPL…LLTS), 224 to 244 (FDLW…YYLA), 263 to 283 (HLVR…WLAQ), 306 to 326 (LPLL…LFWQ), and 343 to 363 (AAIA…QLVV).

It belongs to the UPF0182 family.

It localises to the cell membrane. This is UPF0182 protein syc2310_c from Synechococcus sp. (strain ATCC 27144 / PCC 6301 / SAUG 1402/1) (Anacystis nidulans).